Consider the following 76-residue polypeptide: Small ribosomal subunit protein bS18 (76 aa).

This sequence belongs to the bacterial ribosomal protein bS18 family. As to quaternary structure, part of the 30S ribosomal subunit. Forms a tight heterodimer with protein bS6.

Functionally, binds as a heterodimer with protein bS6 to the central domain of the 16S rRNA, where it helps stabilize the platform of the 30S subunit. The chain is Small ribosomal subunit protein bS18 from Psychrobacter arcticus (strain DSM 17307 / VKM B-2377 / 273-4).